Consider the following 180-residue polypeptide: Diphosphoinositol polyphosphate phosphohydrolase 2 (180 aa).

Met1 is subject to N-acetylmethionine. Substrate contacts are provided by residues Arg10, Lys18–Arg20, and Ser39–Arg41. The 127-residue stretch at Lys18–Lys144 folds into the Nudix hydrolase domain. Mg(2+) contacts are provided by Gly50 and Glu66. The Nudix box signature appears at Gly51–Gly72. The active-site Proton acceptor is the Glu69. Mg(2+) is bound at residue Glu70. Substrate is bound by residues Arg89 to His91, Arg115, and Lys133.

The protein belongs to the Nudix hydrolase family. DIPP subfamily. The cofactor is Mg(2+). Mn(2+) serves as cofactor. As to expression, expressed in heart and, at lower level in skeletal muscle, pancreas and kidney.

It localises to the cytoplasm. It catalyses the reaction diphospho-myo-inositol polyphosphate + H2O = myo-inositol polyphosphate + phosphate.. It carries out the reaction 5-diphospho-1D-myo-inositol 1,2,3,4,6-pentakisphosphate + H2O = 1D-myo-inositol hexakisphosphate + phosphate + H(+). The catalysed reaction is 3,5-bis(diphospho)-1D-myo-inositol 1,2,4,6-tetrakisphosphate + H2O = 3-diphospho-1D-myo-inositol 1,2,4,5,6-pentakisphosphate + phosphate + 2 H(+). The enzyme catalyses 5-diphospho-1D-myo-inositol 1,3,4,6-tetrakisphosphate + H2O = 1D-myo-inositol 1,3,4,5,6-pentakisphosphate + phosphate + H(+). It catalyses the reaction P(1),P(6)-bis(5'-adenosyl) hexaphosphate + H2O = 2 ATP + 2 H(+). It carries out the reaction P(1),P(5)-bis(5'-adenosyl) pentaphosphate + H2O = ADP + ATP + 2 H(+). The catalysed reaction is 5-phospho-alpha-D-ribose 1-diphosphate + H2O = alpha-D-ribose 1,5-bisphosphate + phosphate + H(+). Its function is as follows. Cleaves the beta-phosphate from diphosphoinositol polyphosphates such as PP-InsP5 (diphosphoinositol pentakisphosphate), PP-InsP4 (diphosphoinositol tetrakisphosphate) and [PP]2-InsP4 (bisdiphosphoinositol tetrakisphosphate), suggesting that it may play a role in signal transduction. Diadenosine polyphosphates, particularly Ap6A (P(1),P(6)-bis(5a-adenosyl) hexaphosphate) and Ap5A (P(1),P(5)-bis(5'-adenosyl) pentaphosphate) are downstream effectors of a signaling cascade that regulates cardiac KATP channels, can also be substrates, although with lower preference than the diphosphoinositol polyphosphates. Can also catalyze the hydrolysis of 5-phosphoribose 1-diphosphate, generating the glycolytic activator ribose 1,5-bisphosphate. Does not play a role in U8 snoRNA decapping activity. Binds U8 snoRNA. This is Diphosphoinositol polyphosphate phosphohydrolase 2 from Homo sapiens (Human).